The following is a 496-amino-acid chain: MLSLRPYEFWFVTGSQHLYGEEALKQVEEHSRIMVNEWNRDSVFPFPFVFKSVVTTPEEIRRVCLEANASEQCAGVVTWMHTFSPAKMWIGGLLELRKPLLHLHTQFNRDIPWDSIDMDFMNLNQSAHGDREYGFIGARMGVARKVVVGHWEDPEVRERLAKWMRTAVAFAESRNLKVARFGDNMREVAVTEGDKVGAQIQFGWSVNGYGIGDLVQYIRDVSEQKVNELLDEYEELYDIVPAGRQEGPVRESIREQARIELGLKAFLQDGNFTAFTTTFEDLHGMKQLPGLAVQRLMAEGYGFGGEGDWKTAALVRLMKVMADGKGTSFMEDYTYHFEPGNELILGAHMLEVCPTIAATRPRVEVHPLSIGGKEDPARLVFDGGEGAAVNASLIDLGHRFRLIVNEVDAVKPEHDMPKLPVARILWKPRPSLRDSAEAWILAGGAHHTCFSFAVTTEQLQDFAEMAGIECVVINEHTSVSSFKNELKWNEVFWRGR.

Mn(2+)-binding residues include glutamate 306, glutamate 331, histidine 348, and histidine 447.

It belongs to the arabinose isomerase family. Mn(2+) is required as a cofactor.

It catalyses the reaction beta-L-arabinopyranose = L-ribulose. The protein operates within carbohydrate degradation; L-arabinose degradation via L-ribulose; D-xylulose 5-phosphate from L-arabinose (bacterial route): step 1/3. Catalyzes the conversion of L-arabinose to L-ribulose. This Geobacillus kaustophilus (strain HTA426) protein is L-arabinose isomerase.